A 1969-amino-acid chain; its full sequence is MPKMIKGTEFIVAKKTKNKKKNHFEDIQTTNDINEEESEAIFGNLYDGADEVLPASLAYENGQLPEDGSIQVAFDADDNAYYISYDPENEIFIEPYEKYELDVSALYDAEGNPFDFFANYHVEGAETSQEEESGEYWEQFVGVEGYGYYDENEEWVWTGYFDEDNKFIPNEEEKPAEVEALEEESEATEEVVEQEPQEEVQAEEVVEEPVSQEQPEEEVAAEEYAEAAQEEYEEQPESEQEGSGEYWEQFVGVEGYGYYDENNDWVWTGYFDENNNFVPDQYYDEDAAVAGDEQVEEYSAQQEQVQEEYEQQPEQEGSGEYWEQFVGVEGYGYYDENNDWVWTGYFDENNNFVPDQYYDEYAQPVSEEQYSESVSEEQEPASEEQVAEEPAQVEEVAVEQVPEETQPEQVQEKVQAYEHVEEQQPEEVFADAIDEHYDEITHVEDKAVEEEQIQTDNVVSSDEINWSNYVGNEDYGYYDENNEWVWKGYFNEYGMFIPQEEDYTDSIPVDEQPVEQTADLAEQNEEEVIEETTASDEIVQVEEEVESEPVVPTVSDDLVALEQPFEFDTQQFVGNIDFGYYDESSEWIWTGHFDKDGKFFDFDGNLVYSPQEGVKPVEVPKPTDLTNQIPQNALVVAEPDVFSEDTIQQVDESQFDVGEELVVRGLLNPASTPVQPQELNIKPVFEEEKLNLPVLANEVSLQPQVDYSKRSDFDQLVTQTPVVLEDVVADDLISVDTKGFVPELSQPTFAPKAVSQDQFKLVQPVVSQPKFDQITHLTDEIKMDVNVTSSDVDVQPIQINPSLEVASEPSKLDIFVKKPAVELKKIEFIEPVSEKIDLQIFEQQEIVTKPVSTIQKPTYTDETVSVSVNAIDETTSETDTIVQVTPTTSEASDFDINKILNTKPVETITVELPKDEPKLVTGVHVSLVDVEAKPVEEIVKFDSPKPSVSEVVVEKEDKLTLVEEEPFFNKFIGNEQYGYYNNKNVWIWTGYFDDQNNFVSDKDSKTQKVDQLIEEFNKQEAIKKTEEVEAKKASEPFYNKYIGNKQFGYYNDKNVWIWNGYFDENDQFVPDQSWTKRSEKLIEDELQKQRIHELELELAQAQQAILESTKLKDQEVAKIKEEVLKVQQEAIKAKEVATLRNFVPKGSPLLNPAKEVENSMIVYQEDKLEVNDLRNELSKLKTQREEFDNFSKIRDLDVINLYNASTSHRGMDYVFSGFEKKEEQFVKKPLHFLEEVKADPVQVAKEETISNLDQLLKQDPHLLLAKKTDKSVSPQASLTVLADQKEVELTQQAVRKQAEAIEAERVDVIKPLEQVQLNQSRSLLDDLTPKFEVKPSLIKDDVIQPKYNDDLEPIEQLQFKQERSLLDDYMPKFDDQGLFSKVEFKLPTVNKEYRPKVEPIDVIKPLEPVRINKERSLLDDYLPPKLNAQPTFEKTELDLGLEKPLANGELYEELKAEFSTTITPADSKDMIDQLLEETNDLITSSTQTRSTKIHSFSKSPLKTEPEPILDTKFDDKFIELDENQGFDQLIVESDDELLTDVVQEQVSVNQIAVTNEEYKKDMAELKQFLEKRSEELFKQYFSKFEELTKLQMESFNQIKNELRSEMNEIRDEVRSNKLALTSEITEEIYPSAPKVSRKQRGVHGFSEPTSEFDFDNSLSLVNENNYDLYELLDRIINYEDVPLTSSNLFKAEEYQAKVKQSVYNIKLILKNSEAEATKNYNYILSTLKNEITLLQKDLPIISSQLNKLQHDLRAKQLNRGDYKFVQEQIQELRAEHANKTRAISFYNKKVSDLKSIYAQQIRKIKSDYKKISDLANKRKVSSDYIDQALQSFETARVSQPNIKRNYEQLYRNQLQQNVNANYGNFRRYDPLIENHGYEYFSNHQPREFFSELESIDNDIFSSNDLIYSNRNTYLDENFRINDYELTSNFNDIDAIYGMDKLRLPPFEPSNLVNDMEFNSSFDIDFDTDF.

The stretch at Y148–K166 is one HAT 1 repeat. The disordered stretch occupies residues K174–G244. 2 stretches are compositionally biased toward acidic residues: residues E179 to E207 and Q214 to G242. 3 HAT repeats span residues Y258–V278, A300–Y331, and Y333–V353. A disordered region spans residues Q294 to G319. A disordered region spans residues V365–V393. Residues V374 to A387 show a composition bias toward acidic residues. 2 HAT repeats span residues Y477–I497 and L959–N997. Residues S1000–E1027 are a coiled coil. Residues E1029–Q1067 form an HAT 7 repeat. Coiled-coil stretches lie at residues I1082–F1190, S1547–T1621, and N1758–V1790.

The protein resides in the cell projection. It localises to the attachment organelle membrane. Component of the cytoskeleton-like structure which stabilizes the shape of the wall-less Mycoplasma. This cytoskeleton-like network of accessory proteins containing HMW proteins 1 to 5 allows the proper anchoring of cytadhesin proteins in the mycoplasmal membrane at the attachment organelle. In Mycoplasmoides gallisepticum (strain R(low / passage 15 / clone 2)) (Mycoplasma gallisepticum), this protein is Cytadherence high molecular weight protein 1 (hlp1).